The chain runs to 245 residues: MSNLEHITLEMDKVPLGDNKTLVRNTENISKHSYGGAIDGRTRNTLRVPRAVPETDDDDNDDRPFVKDGNDNPGVDDGLFSTVGGNGGNGGNVNVNVPNGGRRPSFSFPGYNGPGFVTINGVETPIPDVNAYQHKKTLAQGMMDLALLSANANQLRYVLETSSQHPYFYPSLLFISLSIIFQIAVGVGLILNGQYNIKNGHDICRANRINNYTVSGIFIVTVVNVLISAFTVDRDTVPALPANTT.

Topologically, residues M1–P170 are extracellular. N19 and N28 each carry an N-linked (GlcNAc...) asparagine glycan. Residues H32–G101 form a disordered region. Residues N92–G101 show a composition bias toward low complexity. The helix alpha1 stretch occupies residues K135–A146. Residues S149–H165 form a helix alpha2 region. A helical transmembrane segment spans residues S171 to L191. Topologically, residues N192–N211 are cytoplasmic. The chain crosses the membrane as a helical span at residues Y212–V232. At D233–T245 the chain is on the extracellular side.

This sequence belongs to the ninjurin family. As to quaternary structure, homooligomer. Post-translationally, cleaved by Mmp1 protease to generate the Secreted ninjurin-A form.

Its subcellular location is the cell membrane. The protein resides in the secreted. Functionally, effector of non-apoptotic necrotic cell death that mediates plasma membrane rupture (cytolysis): oligomerizes in response to death stimuli and promotes plasma membrane rupture by introducing hydrophilic faces of 2 alpha helices into the hydrophobic membrane, leading to release intracellular molecules that propagate the inflammatory response. Also acts as a homophilic transmembrane adhesion molecule that promotes cell adhesion by mediating homophilic interactions via its extracellular region. In terms of biological role, secreted form generated by cleavage, which acts as a negative regulator of cell adhesion. Promotes the loss of cell adhesion in a cell non-autonomous manner. The polypeptide is Ninjurin-A (Drosophila melanogaster (Fruit fly)).